Here is a 388-residue protein sequence, read N- to C-terminus: Succinate--CoA ligase [ADP-forming] subunit beta (388 aa).

Residues 9–244 (KQLFAEYGLP…PSQEDEREAH (236 aa)) form the ATP-grasp domain. Residues Lys-46, 53 to 55 (GRG), Glu-99, Ser-102, and Glu-107 contribute to the ATP site. The Mg(2+) site is built by Asn-199 and Asp-213. Substrate-binding positions include Asn-264 and 321–323 (GIV).

Belongs to the succinate/malate CoA ligase beta subunit family. In terms of assembly, heterotetramer of two alpha and two beta subunits. It depends on Mg(2+) as a cofactor.

The enzyme catalyses succinate + ATP + CoA = succinyl-CoA + ADP + phosphate. The catalysed reaction is GTP + succinate + CoA = succinyl-CoA + GDP + phosphate. Its pathway is carbohydrate metabolism; tricarboxylic acid cycle; succinate from succinyl-CoA (ligase route): step 1/1. Functionally, succinyl-CoA synthetase functions in the citric acid cycle (TCA), coupling the hydrolysis of succinyl-CoA to the synthesis of either ATP or GTP and thus represents the only step of substrate-level phosphorylation in the TCA. The beta subunit provides nucleotide specificity of the enzyme and binds the substrate succinate, while the binding sites for coenzyme A and phosphate are found in the alpha subunit. The polypeptide is Succinate--CoA ligase [ADP-forming] subunit beta (Aliivibrio salmonicida (strain LFI1238) (Vibrio salmonicida (strain LFI1238))).